A 426-amino-acid chain; its full sequence is MKKDELIFKLIEQENNRQCEGIELIASENFVSPQVLKAAGSILTNKYAEGYPRKRYYGGCQIVDEIEQTAIDRLKHLFHAEWVNVQPHSGAQANMTVFLACLQPGDYFLGLGLSHGGHLSHGSPVNFSGLSYKALEYGTEKENGKINYQQLEYVAMEKIPKLIIAGASAYSRDWDYQRIRLIADKIGAIFMVDMAHPAGLIAAQLLDNPLHYAHIVTSTTHKTLRGPRGGIILMGKDFENPWGRTTTKGKIKMMSEILDSALFPGVQGGPLEHIIAAKAIAFYEALQPEYVVYQKQVKKNAQVMAKALNSTGYKIVSGGTDNHLMLVDLRSKFPTLSGKQAEVALVSADITVNKNMVPFDNRSPFLTSGLRFGTPAITTRGAKEPLMEEIVELIDTVLSNVDNDKIVSSVKKKVNILMKDYPLFAW.

(6S)-5,6,7,8-tetrahydrofolate-binding positions include Leu113 and Gly117–Leu119. N6-(pyridoxal phosphate)lysine is present on Lys222. Ser363–Phe365 lines the (6S)-5,6,7,8-tetrahydrofolate pocket.

Belongs to the SHMT family. In terms of assembly, homodimer. The cofactor is pyridoxal 5'-phosphate.

It is found in the cytoplasm. It carries out the reaction (6R)-5,10-methylene-5,6,7,8-tetrahydrofolate + glycine + H2O = (6S)-5,6,7,8-tetrahydrofolate + L-serine. Its pathway is one-carbon metabolism; tetrahydrofolate interconversion. The protein operates within amino-acid biosynthesis; glycine biosynthesis; glycine from L-serine: step 1/1. In terms of biological role, catalyzes the reversible interconversion of serine and glycine with tetrahydrofolate (THF) serving as the one-carbon carrier. This reaction serves as the major source of one-carbon groups required for the biosynthesis of purines, thymidylate, methionine, and other important biomolecules. Also exhibits THF-independent aldolase activity toward beta-hydroxyamino acids, producing glycine and aldehydes, via a retro-aldol mechanism. This Azobacteroides pseudotrichonymphae genomovar. CFP2 protein is Serine hydroxymethyltransferase.